We begin with the raw amino-acid sequence, 236 residues long: Elastase-1 (236 aa).

The 236-residue stretch at 1–236 folds into the Peptidase S1 domain; that stretch reads VVGGRVAQPN…AYISWMNGIM (236 aa). Residues Cys30 and Cys46 are joined by a disulfide bond. The active-site Charge relay system is the His45. 5 residues coordinate Ca(2+): Glu59, Asn61, Thr64, Glu66, and Glu69. Asp93 serves as the catalytic Charge relay system. Intrachain disulfides connect Cys127–Cys193, Cys158–Cys174, and Cys183–Cys213. The Charge relay system role is filled by Ser187.

This sequence belongs to the peptidase S1 family. Elastase subfamily. Ca(2+) serves as cofactor. Pancreas.

The protein resides in the secreted. It catalyses the reaction Hydrolysis of proteins, including elastin. Preferential cleavage: Ala-|-Xaa.. Functionally, acts upon elastin. The sequence is that of Elastase-1 from Salmo salar (Atlantic salmon).